The chain runs to 555 residues: Glypican-6 (555 aa).

An N-terminal signal peptide occupies residues 1 to 23; it reads MPSWIRAVILPLSGLLLTLPAAA. The span at 348-357 shows a compositional bias: low complexity; the sequence is PALRSARSAP. Disordered regions lie at residues 348 to 376 and 480 to 501; these read PALR…PTTA and GNDV…GSGC. S530 is lipidated: GPI-anchor amidated serine. A propeptide spans 531 to 555 (removed in mature form); that stretch reads ASKFSSSLISWSLVCMVLALQRLYR.

It belongs to the glypican family. In terms of tissue distribution, in the cartilage growth-plate, gradient of expression with highest levels from the proliferative and pre-hypertrophic zones to lowest, if any, in the hypertrophic zones (at protein level).

It is found in the cell membrane. Its subcellular location is the secreted. The protein resides in the extracellular space. Its function is as follows. Cell surface proteoglycan that bears heparan sulfate. Putative cell surface coreceptor for growth factors, extracellular matrix proteins, proteases and anti-proteases. Enhances migration and invasion of cancer cells through WNT5A signaling. The polypeptide is Glypican-6 (Gpc6) (Mus musculus (Mouse)).